Reading from the N-terminus, the 271-residue chain is Shikimate dehydrogenase (NADP(+)) (271 aa).

Shikimate contacts are provided by residues 14-16 (SQS) and Thr61. Lys65 serves as the catalytic Proton acceptor. Residues Asn86 and Asp101 each contribute to the shikimate site. NADP(+)-binding positions include 125–129 (GAGGA), 148–153 (NRTHAR), and Met212. Tyr214 is a binding site for shikimate. Gly236 is a binding site for NADP(+).

This sequence belongs to the shikimate dehydrogenase family. As to quaternary structure, homodimer.

It carries out the reaction shikimate + NADP(+) = 3-dehydroshikimate + NADPH + H(+). It functions in the pathway metabolic intermediate biosynthesis; chorismate biosynthesis; chorismate from D-erythrose 4-phosphate and phosphoenolpyruvate: step 4/7. Involved in the biosynthesis of the chorismate, which leads to the biosynthesis of aromatic amino acids. Catalyzes the reversible NADPH linked reduction of 3-dehydroshikimate (DHSA) to yield shikimate (SA). The sequence is that of Shikimate dehydrogenase (NADP(+)) from Edwardsiella ictaluri (strain 93-146).